The following is a 199-amino-acid chain: Probable nicotinate-nucleotide adenylyltransferase (199 aa).

The protein belongs to the NadD family.

The catalysed reaction is nicotinate beta-D-ribonucleotide + ATP + H(+) = deamido-NAD(+) + diphosphate. The protein operates within cofactor biosynthesis; NAD(+) biosynthesis; deamido-NAD(+) from nicotinate D-ribonucleotide: step 1/1. In terms of biological role, catalyzes the reversible adenylation of nicotinate mononucleotide (NaMN) to nicotinic acid adenine dinucleotide (NaAD). This chain is Probable nicotinate-nucleotide adenylyltransferase, found in Roseiflexus sp. (strain RS-1).